The sequence spans 483 residues: UDP-N-acetylmuramoyl-L-alanyl-D-glutamate--L-lysine ligase (483 aa).

Residue Ser-44 coordinates UDP-N-acetyl-alpha-D-muramoyl-L-alanyl-D-glutamate. ATP is bound at residue 120–126 (GTKGKTT). UDP-N-acetyl-alpha-D-muramoyl-L-alanyl-D-glutamate contacts are provided by residues 162-163 (TT), Ser-189, and Arg-197. Lys-231 is modified (N6-carboxylysine). The L-lysine recognition motif signature appears at 406 to 409 (DDPN).

The protein belongs to the MurCDEF family. MurE subfamily. Carboxylation is probably crucial for Mg(2+) binding and, consequently, for the gamma-phosphate positioning of ATP.

It localises to the cytoplasm. The catalysed reaction is UDP-N-acetyl-alpha-D-muramoyl-L-alanyl-D-glutamate + L-lysine + ATP = UDP-N-acetyl-alpha-D-muramoyl-L-alanyl-gamma-D-glutamyl-L-lysine + ADP + phosphate + H(+). It functions in the pathway cell wall biogenesis; peptidoglycan biosynthesis. In terms of biological role, catalyzes the addition of L-lysine to the nucleotide precursor UDP-N-acetylmuramoyl-L-alanyl-D-glutamate (UMAG) in the biosynthesis of bacterial cell-wall peptidoglycan. In Streptococcus mutans serotype c (strain ATCC 700610 / UA159), this protein is UDP-N-acetylmuramoyl-L-alanyl-D-glutamate--L-lysine ligase.